The sequence spans 279 residues: uncharacterized protein (279 aa).

3 helical membrane passes run 31 to 51 (GYIA…FHAT), 67 to 87 (LLSI…AKII), and 115 to 135 (EITG…SLAL).

It belongs to the transketolase family. Thiamine diphosphate is required as a cofactor.

It is found in the cell membrane. This is an uncharacterized protein from Sinorhizobium fredii (strain NBRC 101917 / NGR234).